The following is a 150-amino-acid chain: 3-hydroxyacyl-[acyl-carrier-protein] dehydratase FabZ (150 aa).

His-54 is a catalytic residue.

It belongs to the thioester dehydratase family. FabZ subfamily.

It is found in the cytoplasm. The catalysed reaction is a (3R)-hydroxyacyl-[ACP] = a (2E)-enoyl-[ACP] + H2O. Functionally, involved in unsaturated fatty acids biosynthesis. Catalyzes the dehydration of short chain beta-hydroxyacyl-ACPs and long chain saturated and unsaturated beta-hydroxyacyl-ACPs. This Chromobacterium violaceum (strain ATCC 12472 / DSM 30191 / JCM 1249 / CCUG 213 / NBRC 12614 / NCIMB 9131 / NCTC 9757 / MK) protein is 3-hydroxyacyl-[acyl-carrier-protein] dehydratase FabZ.